The following is a 150-amino-acid chain: Deoxyuridine 5'-triphosphate nucleotidohydrolase (150 aa).

Substrate-binding positions include 70–72 (RSG), Asn83, and 87–89 (TID).

This sequence belongs to the dUTPase family. Requires Mg(2+) as cofactor.

It carries out the reaction dUTP + H2O = dUMP + diphosphate + H(+). It functions in the pathway pyrimidine metabolism; dUMP biosynthesis; dUMP from dCTP (dUTP route): step 2/2. Its function is as follows. This enzyme is involved in nucleotide metabolism: it produces dUMP, the immediate precursor of thymidine nucleotides and it decreases the intracellular concentration of dUTP so that uracil cannot be incorporated into DNA. The chain is Deoxyuridine 5'-triphosphate nucleotidohydrolase from Desulfotalea psychrophila (strain LSv54 / DSM 12343).